A 355-amino-acid polypeptide reads, in one-letter code: 3-dehydroquinate synthase (355 aa).

Residues 105–109, 129–130, K142, K151, and 169–172 contribute to the NAD(+) site; these read GVVGD, TS, and TLKT. 3 residues coordinate Zn(2+): E184, H246, and H263.

It belongs to the sugar phosphate cyclases superfamily. Dehydroquinate synthase family. The cofactor is Co(2+). It depends on Zn(2+) as a cofactor. NAD(+) is required as a cofactor.

It is found in the cytoplasm. The enzyme catalyses 7-phospho-2-dehydro-3-deoxy-D-arabino-heptonate = 3-dehydroquinate + phosphate. Its pathway is metabolic intermediate biosynthesis; chorismate biosynthesis; chorismate from D-erythrose 4-phosphate and phosphoenolpyruvate: step 2/7. Catalyzes the conversion of 3-deoxy-D-arabino-heptulosonate 7-phosphate (DAHP) to dehydroquinate (DHQ). The chain is 3-dehydroquinate synthase from Streptococcus agalactiae serotype Ia (strain ATCC 27591 / A909 / CDC SS700).